The chain runs to 389 residues: Sulfate adenylyltransferase (389 aa).

This sequence belongs to the sulfate adenylyltransferase family.

The enzyme catalyses sulfate + ATP + H(+) = adenosine 5'-phosphosulfate + diphosphate. The protein operates within sulfur metabolism; hydrogen sulfide biosynthesis; sulfite from sulfate: step 1/3. This is Sulfate adenylyltransferase from Deinococcus deserti (strain DSM 17065 / CIP 109153 / LMG 22923 / VCD115).